The chain runs to 1447 residues: Sister chromatid cohesion protein PDS5 homolog B (1447 aa).

The stretch at 383–419 (LLVNDHLLNFVRERTLDKRWRVRKEAMMGLAQIYKKY) is one HEAT repeat. K1136 is subject to N6-acetyllysine. Polar residues predominate over residues 1137 to 1155 (PLSSAGKQSQTKSSRMETV). The disordered stretch occupies residues 1137–1447 (PLSSAGKQSQ…RRRSSKRERR (311 aa)). Residues S1140, S1162, S1166, S1176, S1182, and S1191 each carry the phosphoserine modification. The span at 1156 to 1167 (SNASSSSNPSSP) shows a compositional bias: low complexity. Residues 1172–1184 (GRLDSTEMDHSEN) show a composition bias toward basic and acidic residues. The segment covering 1196 to 1214 (KKSDKREDSDLVRSELEKP) has biased composition (basic and acidic residues). Position 1221 is a phosphoserine (S1221). A compositionally biased stretch (basic and acidic residues) spans 1225–1243 (PEEKLGMDDLSKLVQEQKP). Basic residues predominate over residues 1245–1254 (GSQRGRKRGH). Positions 1247-1259 (QRGRKRGHAASES) form a DNA-binding region, a.T hook 1. Phosphoserine occurs at positions 1257 and 1259. Basic and acidic residues predominate over residues 1265–1274 (PEEKRHKEEL). The residue at position 1283 (S1283) is a Phosphoserine. The segment at residues 1287–1299 (KGKRGRPPKPLGG) is a DNA-binding region (a.T hook 2). Basic residues-rich tracts occupy residues 1309–1318 (TSKKGNKKKP) and 1341–1352 (KSKQQRTSKRAQ). S1357 and S1365 each carry phosphoserine. Over residues 1358–1371 (PETSAVESTQSTPQ) the composition is skewed to polar residues. The residue at position 1366 (T1366) is a Phosphothreonine. Position 1368 is a phosphoserine (S1368). Residues T1369 and T1380 each carry the phosphothreonine modification. Residues 1371-1383 (QKGRGRPSKTPSP) constitute a DNA-binding region (a.T hook 3). A compositionally biased stretch (low complexity) spans 1378–1387 (SKTPSPSQPK). S1382, S1416, and S1419 each carry phosphoserine. Over residues 1422–1432 (TTQEGAEEEDI) the composition is skewed to acidic residues. A compositionally biased stretch (basic residues) spans 1437-1447 (VRRRSSKRERR).

This sequence belongs to the PDS5 family. In terms of assembly, interacts with the cohesin complex. Interacts with RAD21; the interaction is direct. Interacts with WAPL (via FGF motifs) or CDCA5 (via the FGF motif); the interaction is direct, cohesin-dependent and competitive. Highly expressed in intact prostate with levels decreasing after castration. Expressed exclusively in prostate cells inhibited from proliferating by long-term androgen exposure.

Its subcellular location is the nucleus. In terms of biological role, regulator of sister chromatid cohesion in mitosis which may stabilize cohesin complex association with chromatin. May couple sister chromatid cohesion during mitosis to DNA replication. Cohesion ensures that chromosome partitioning is accurate in both meiotic and mitotic cells and plays an important role in DNA repair. Plays a role in androgen-induced proliferative arrest in prostate cells. The sequence is that of Sister chromatid cohesion protein PDS5 homolog B (Pds5b) from Rattus norvegicus (Rat).